The sequence spans 59 residues: Large ribosomal subunit protein bL32 (59 aa).

The interval 1 to 40 is disordered; that stretch reads MAVQQNKKSPSKRGMHRSHDFLRTTPLSVDPGTGEVHLRH.

The protein belongs to the bacterial ribosomal protein bL32 family.

This chain is Large ribosomal subunit protein bL32, found in Nitrosospira multiformis (strain ATCC 25196 / NCIMB 11849 / C 71).